The sequence spans 249 residues: Putative S-adenosyl-L-methionine-dependent methyltransferase Mkms_0592 (249 aa).

Residues D111 and 141-142 each bind S-adenosyl-L-methionine; that span reads DL.

The protein belongs to the UPF0677 family.

Exhibits S-adenosyl-L-methionine-dependent methyltransferase activity. In Mycobacterium sp. (strain KMS), this protein is Putative S-adenosyl-L-methionine-dependent methyltransferase Mkms_0592.